A 181-amino-acid polypeptide reads, in one-letter code: Large ribosomal subunit protein uL6 (181 aa).

This sequence belongs to the universal ribosomal protein uL6 family. As to quaternary structure, part of the 50S ribosomal subunit.

This protein binds to the 23S rRNA, and is important in its secondary structure. It is located near the subunit interface in the base of the L7/L12 stalk, and near the tRNA binding site of the peptidyltransferase center. The protein is Large ribosomal subunit protein uL6 of Saccharolobus solfataricus (strain ATCC 35092 / DSM 1617 / JCM 11322 / P2) (Sulfolobus solfataricus).